A 531-amino-acid chain; its full sequence is T-complex protein 1 subunit zeta-2 (531 aa).

The protein belongs to the TCP-1 chaperonin family. Component of the chaperonin-containing T-complex (TRiC), a heterooligomeric complex of about 850 to 900 kDa that forms two stacked rings, 12 to 16 nm in diameter. Testis specific.

It is found in the cytoplasm. Functionally, component of the chaperonin-containing T-complex (TRiC), a molecular chaperone complex that assists the folding of proteins upon ATP hydrolysis. The protein is T-complex protein 1 subunit zeta-2 (Cct6b) of Mus musculus (Mouse).